The following is a 196-amino-acid chain: Holliday junction branch migration complex subunit RuvA (196 aa).

The segment at 1-63 (MIASVRGEVL…EDSMTLYGFP (63 aa)) is domain I. The domain II stretch occupies residues 64–138 (DGETRDLFLT…DKVGVAATGG (75 aa)). The segment at 138 to 142 (GALST) is flexible linker. Residues 143-196 (NGHAVRSPVVEALVGLGFAAKQAEEATDTVLAANHDATTSSALRSALSLLGKAR) are domain III.

The protein belongs to the RuvA family. As to quaternary structure, homotetramer. Forms an RuvA(8)-RuvB(12)-Holliday junction (HJ) complex. HJ DNA is sandwiched between 2 RuvA tetramers; dsDNA enters through RuvA and exits via RuvB. An RuvB hexamer assembles on each DNA strand where it exits the tetramer. Each RuvB hexamer is contacted by two RuvA subunits (via domain III) on 2 adjacent RuvB subunits; this complex drives branch migration. In the full resolvosome a probable DNA-RuvA(4)-RuvB(12)-RuvC(2) complex forms which resolves the HJ.

Its subcellular location is the cytoplasm. Its function is as follows. The RuvA-RuvB-RuvC complex processes Holliday junction (HJ) DNA during genetic recombination and DNA repair, while the RuvA-RuvB complex plays an important role in the rescue of blocked DNA replication forks via replication fork reversal (RFR). RuvA specifically binds to HJ cruciform DNA, conferring on it an open structure. The RuvB hexamer acts as an ATP-dependent pump, pulling dsDNA into and through the RuvAB complex. HJ branch migration allows RuvC to scan DNA until it finds its consensus sequence, where it cleaves and resolves the cruciform DNA. The protein is Holliday junction branch migration complex subunit RuvA of Mycobacterium bovis (strain ATCC BAA-935 / AF2122/97).